We begin with the raw amino-acid sequence, 185 residues long: ATP synthase subunit b (185 aa).

The chain crosses the membrane as a helical span at residues 26–46; the sequence is LVLIGFAILLFIVIKFVVPMF.

This sequence belongs to the ATPase B chain family. F-type ATPases have 2 components, F(1) - the catalytic core - and F(0) - the membrane proton channel. F(1) has five subunits: alpha(3), beta(3), gamma(1), delta(1), epsilon(1). F(0) has three main subunits: a(1), b(2) and c(10-14). The alpha and beta chains form an alternating ring which encloses part of the gamma chain. F(1) is attached to F(0) by a central stalk formed by the gamma and epsilon chains, while a peripheral stalk is formed by the delta and b chains.

The protein localises to the cell membrane. Functionally, f(1)F(0) ATP synthase produces ATP from ADP in the presence of a proton or sodium gradient. F-type ATPases consist of two structural domains, F(1) containing the extramembraneous catalytic core and F(0) containing the membrane proton channel, linked together by a central stalk and a peripheral stalk. During catalysis, ATP synthesis in the catalytic domain of F(1) is coupled via a rotary mechanism of the central stalk subunits to proton translocation. Its function is as follows. Component of the F(0) channel, it forms part of the peripheral stalk, linking F(1) to F(0). In Renibacterium salmoninarum (strain ATCC 33209 / DSM 20767 / JCM 11484 / NBRC 15589 / NCIMB 2235), this protein is ATP synthase subunit b.